The chain runs to 457 residues: Na(+)/H(+) antiporter NhaA (457 aa).

11 consecutive transmembrane segments (helical) span residues 33 to 53 (ASGI…NSPL), 76 to 96 (FSLA…VVGM), 114 to 134 (LLPL…FLAF), 142 to 162 (AGWG…LTLL), 172 to 192 (VFVT…IALF), 196 to 216 (GLQL…ALMS), 235 to 255 (YALH…GLAI), 308 to 328 (FVHA…ALAN), 349 to 369 (TALA…WIAV), 385 to 405 (LIGV…IAGL), and 419 to 439 (VGIL…LRLT).

Belongs to the NhaA Na(+)/H(+) (TC 2.A.33) antiporter family.

Its subcellular location is the cell inner membrane. The catalysed reaction is Na(+)(in) + 2 H(+)(out) = Na(+)(out) + 2 H(+)(in). Na(+)/H(+) antiporter that extrudes sodium in exchange for external protons. The sequence is that of Na(+)/H(+) antiporter NhaA from Anaeromyxobacter sp. (strain Fw109-5).